The primary structure comprises 235 residues: Putative N-acetylmannosamine-6-phosphate 2-epimerase (235 aa).

This sequence belongs to the NanE family.

It carries out the reaction an N-acyl-D-glucosamine 6-phosphate = an N-acyl-D-mannosamine 6-phosphate. It functions in the pathway amino-sugar metabolism; N-acetylneuraminate degradation; D-fructose 6-phosphate from N-acetylneuraminate: step 3/5. In terms of biological role, converts N-acetylmannosamine-6-phosphate (ManNAc-6-P) to N-acetylglucosamine-6-phosphate (GlcNAc-6-P). The chain is Putative N-acetylmannosamine-6-phosphate 2-epimerase from Enterobacter sp. (strain 638).